The primary structure comprises 176 residues: ATP-dependent protease subunit HslV (176 aa).

Residue Thr-2 is part of the active site. 3 residues coordinate Na(+): Gly-157, Cys-160, and Thr-163.

Belongs to the peptidase T1B family. HslV subfamily. In terms of assembly, a double ring-shaped homohexamer of HslV is capped on each side by a ring-shaped HslU homohexamer. The assembly of the HslU/HslV complex is dependent on binding of ATP.

It localises to the cytoplasm. It catalyses the reaction ATP-dependent cleavage of peptide bonds with broad specificity.. Allosterically activated by HslU binding. Functionally, protease subunit of a proteasome-like degradation complex believed to be a general protein degrading machinery. This Klebsiella pneumoniae (strain 342) protein is ATP-dependent protease subunit HslV.